The chain runs to 689 residues: Elongation factor G (689 aa).

A tr-type G domain is found at 9 to 283 (AKFRNIGIMA…AIVEFMPSPL (275 aa)). GTP is bound by residues 18–25 (AHIDAGKT), 82–86 (DTPGH), and 136–139 (NKMD).

This sequence belongs to the TRAFAC class translation factor GTPase superfamily. Classic translation factor GTPase family. EF-G/EF-2 subfamily.

It is found in the cytoplasm. In terms of biological role, catalyzes the GTP-dependent ribosomal translocation step during translation elongation. During this step, the ribosome changes from the pre-translocational (PRE) to the post-translocational (POST) state as the newly formed A-site-bound peptidyl-tRNA and P-site-bound deacylated tRNA move to the P and E sites, respectively. Catalyzes the coordinated movement of the two tRNA molecules, the mRNA and conformational changes in the ribosome. This chain is Elongation factor G, found in Clostridium botulinum (strain Kyoto / Type A2).